Here is a 288-residue protein sequence, read N- to C-terminus: Phytanoyl-CoA dioxygenase domain-containing protein 1 homolog (288 aa).

Residues Lys-95, Met-134, 149–151, and Trp-167 contribute to the 2-oxoglutarate site; that span reads HVD. Residues His-149 and Asp-151 each coordinate Fe cation. His-242 is a binding site for Fe cation. Residues Ser-244 and Arg-253 each coordinate 2-oxoglutarate.

Belongs to the PhyH family. PHYHD1 subfamily. The cofactor is Fe cation.

Functionally, has alpha-ketoglutarate-dependent dioxygenase activity. Does not show detectable activity towards fatty acid CoA thioesters. Is not expected to be active with phytanoyl CoA. This Caenorhabditis briggsae protein is Phytanoyl-CoA dioxygenase domain-containing protein 1 homolog.